The primary structure comprises 65 residues: Small ribosomal subunit protein eS17 (65 aa).

This sequence belongs to the eukaryotic ribosomal protein eS17 family.

The sequence is that of Small ribosomal subunit protein eS17 from Methanocella arvoryzae (strain DSM 22066 / NBRC 105507 / MRE50).